We begin with the raw amino-acid sequence, 305 residues long: P2Y purinoceptor 14 (305 aa).

At 1 to 29 (MDNTTTTEPPKQPCTRNTLITQQIIPMLY) the chain is on the extracellular side. N3 carries an N-linked (GlcNAc...) asparagine glycan. A helical membrane pass occupies residues 30-50 (CVVFITGVLLNGISGWIFFYV). The Cytoplasmic segment spans residues 51 to 55 (PSSKS). The helical transmembrane segment at 56-76 (FIIYLKNIVVADFLMGLTFPF) threads the bilayer. The Extracellular segment spans residues 77 to 96 (KVLSDSGLGPWQLNVFVFRV). Residues 97 to 117 (SAVIFYVNMYVSIAFFGLISF) form a helical membrane-spanning segment. Topologically, residues 118–139 (DRYYKIVKPLLVSIVQSVNYSK) are cytoplasmic. The helical transmembrane segment at 140–160 (VLSVLVWVLMLLLAVPNIILT) threads the bilayer. Residue N161 is glycosylated (N-linked (GlcNAc...) asparagine). Over 161 to 188 (NQSVKDVTNIQCMELKNELGRKWHKASN) the chain is Extracellular. The chain crosses the membrane as a helical span at residues 189–209 (YVFVSIFWIVFLLLTVFYMAI). Topologically, residues 210–234 (TRKIFKSHLKSRKNSISVKRKSSRN) are cytoplasmic. Residues 235 to 255 (IFSIVLAFVACFAPYHVARIP) traverse the membrane as a helical segment. Residues 256–278 (YTKSQTEGHYSCQAKETLLYTKE) lie on the Extracellular side of the membrane. The helical transmembrane segment at 279–299 (FTLLLSAANVCLDPISISSYA) threads the bilayer. Residues 300–305 (SRLEKS) are Cytoplasmic-facing.

This sequence belongs to the G-protein coupled receptor 1 family.

The protein resides in the cell membrane. Receptor for UDP-glucose coupled to G-proteins. In Rattus norvegicus (Rat), this protein is P2Y purinoceptor 14 (P2ry14).